The chain runs to 380 residues: Cobalt-precorrin-5B C(1)-methyltransferase (380 aa).

It belongs to the CbiD family.

It carries out the reaction Co-precorrin-5B + S-adenosyl-L-methionine = Co-precorrin-6A + S-adenosyl-L-homocysteine. It participates in cofactor biosynthesis; adenosylcobalamin biosynthesis; cob(II)yrinate a,c-diamide from sirohydrochlorin (anaerobic route): step 6/10. Catalyzes the methylation of C-1 in cobalt-precorrin-5B to form cobalt-precorrin-6A. The chain is Cobalt-precorrin-5B C(1)-methyltransferase from Methanosphaera stadtmanae (strain ATCC 43021 / DSM 3091 / JCM 11832 / MCB-3).